Here is a 373-residue protein sequence, read N- to C-terminus: CCA-adding enzyme (373 aa).

Positions 8 and 11 each coordinate ATP. CTP contacts are provided by G8 and R11. Mg(2+) is bound by residues D21 and D23. Residues R91, R137, and R140 each coordinate ATP. 3 residues coordinate CTP: R91, R137, and R140.

This sequence belongs to the tRNA nucleotidyltransferase/poly(A) polymerase family. Bacterial CCA-adding enzyme type 2 subfamily. Mg(2+) serves as cofactor.

The enzyme catalyses a tRNA precursor + 2 CTP + ATP = a tRNA with a 3' CCA end + 3 diphosphate. It catalyses the reaction a tRNA with a 3' CCA end + 2 CTP + ATP = a tRNA with a 3' CCACCA end + 3 diphosphate. Its function is as follows. Catalyzes the addition and repair of the essential 3'-terminal CCA sequence in tRNAs without using a nucleic acid template. Adds these three nucleotides in the order of C, C, and A to the tRNA nucleotide-73, using CTP and ATP as substrates and producing inorganic pyrophosphate. tRNA 3'-terminal CCA addition is required both for tRNA processing and repair. Also involved in tRNA surveillance by mediating tandem CCA addition to generate a CCACCA at the 3' terminus of unstable tRNAs. While stable tRNAs receive only 3'-terminal CCA, unstable tRNAs are marked with CCACCA and rapidly degraded. The sequence is that of CCA-adding enzyme from Marinobacter nauticus (strain ATCC 700491 / DSM 11845 / VT8) (Marinobacter aquaeolei).